The chain runs to 407 residues: Betaine--homocysteine S-methyltransferase 1 (407 aa).

The 304-residue stretch at 11 to 314 (RGILERLNAG…YHIRAIAEEL (304 aa)) folds into the Hcy-binding domain. 3 positions are modified to N6-succinyllysine: Lys40, Lys93, and Lys98. Residue Cys217 participates in Zn(2+) binding. Lys232 and Lys241 each carry N6-succinyllysine. Zn(2+)-binding residues include Cys299 and Cys300. Ser330 carries the phosphoserine modification. N6-succinyllysine is present on residues Lys340 and Lys377.

In terms of assembly, homotetramer. The cofactor is Zn(2+). Highly expressed in liver and kidney (at protein level). Expressed at lower levels in testis, lung, cerebellum, skeletal muscle and pancreas (at protein level).

It localises to the cytoplasm. The protein localises to the cytosol. The protein resides in the nucleus. It carries out the reaction L-homocysteine + glycine betaine = N,N-dimethylglycine + L-methionine. It functions in the pathway amine and polyamine degradation; betaine degradation; sarcosine from betaine: step 1/2. The protein operates within amino-acid biosynthesis; L-methionine biosynthesis via de novo pathway; L-methionine from L-homocysteine (BhmT route): step 1/1. Involved in the regulation of homocysteine metabolism. Converts betaine and homocysteine to dimethylglycine and methionine, respectively. This reaction is also required for the irreversible oxidation of choline. The sequence is that of Betaine--homocysteine S-methyltransferase 1 from Rattus norvegicus (Rat).